The primary structure comprises 607 residues: Aspartate--tRNA(Asp/Asn) ligase (607 aa).

Residue Glu194 participates in L-aspartate binding. Residues 218–221 (QLFK) are aspartate. Position 240 (Arg240) interacts with L-aspartate. ATP contacts are provided by residues 240 to 242 (RDE) and Gln249. His468 is a binding site for L-aspartate. Glu502 contributes to the ATP binding site. Arg509 contacts L-aspartate. 554 to 557 (GLDR) lines the ATP pocket.

The protein belongs to the class-II aminoacyl-tRNA synthetase family. Type 1 subfamily. Homodimer.

It localises to the cytoplasm. The catalysed reaction is tRNA(Asx) + L-aspartate + ATP = L-aspartyl-tRNA(Asx) + AMP + diphosphate. Aspartyl-tRNA synthetase with relaxed tRNA specificity since it is able to aspartylate not only its cognate tRNA(Asp) but also tRNA(Asn). Reaction proceeds in two steps: L-aspartate is first activated by ATP to form Asp-AMP and then transferred to the acceptor end of tRNA(Asp/Asn). The polypeptide is Aspartate--tRNA(Asp/Asn) ligase (Desulfotalea psychrophila (strain LSv54 / DSM 12343)).